The chain runs to 113 residues: Phosphorelay protein LuxU (113 aa).

The HPt domain occupies 18–113 (GEENVPILVN…THQCYSDLVH (96 aa)). His57 carries the phosphohistidine modification.

Monomer.

Functionally, phosphorelay protein which receives sensory signals from a sensory kinase and transmit them to LuxO. At low cell density, a phosphoryl group is transferred from the sensory kinase, probably on His-57 and this phosphoryl group is further transferred to LuxO. This Vibrio cholerae serotype O1 (strain ATCC 39315 / El Tor Inaba N16961) protein is Phosphorelay protein LuxU (luxU).